Consider the following 558-residue polypeptide: Potassium-transporting ATPase potassium-binding subunit (558 aa).

12 consecutive transmembrane segments (helical) span residues M1–L21, I60–I80, V129–L149, F169–G189, W246–F266, I281–F301, F326–V346, L353–G373, V376–I396, I415–I435, I485–L505, and L523–P543.

Belongs to the KdpA family. As to quaternary structure, the system is composed of three essential subunits: KdpA, KdpB and KdpC.

It is found in the cell membrane. Part of the high-affinity ATP-driven potassium transport (or Kdp) system, which catalyzes the hydrolysis of ATP coupled with the electrogenic transport of potassium into the cytoplasm. This subunit binds the extracellular potassium ions and delivers the ions to the membrane domain of KdpB through an intramembrane tunnel. This is Potassium-transporting ATPase potassium-binding subunit from Staphylococcus haemolyticus (strain JCSC1435).